A 438-amino-acid polypeptide reads, in one-letter code: DNA primase DnaG (438 aa).

The region spanning 171–245 (DAILVVEGRA…DIDYVARAPE (75 aa)) is the Toprim domain. Mg(2+) is bound by residues Glu-177, Asp-219, and Asp-221.

Belongs to the archaeal DnaG primase family. In terms of assembly, forms a ternary complex with MCM helicase and DNA. Component of the archaeal exosome complex. Requires Mg(2+) as cofactor.

The enzyme catalyses ssDNA + n NTP = ssDNA/pppN(pN)n-1 hybrid + (n-1) diphosphate.. Its function is as follows. RNA polymerase that catalyzes the synthesis of short RNA molecules used as primers for DNA polymerase during DNA replication. Also part of the exosome, which is a complex involved in RNA degradation. Acts as a poly(A)-binding protein that enhances the interaction between heteromeric, adenine-rich transcripts and the exosome. The protein is DNA primase DnaG of Methanothrix thermoacetophila (strain DSM 6194 / JCM 14653 / NBRC 101360 / PT) (Methanosaeta thermophila).